Here is a 688-residue protein sequence, read N- to C-terminus: Elongation factor G (688 aa).

Residues 8 to 282 (EKTRNIGIMA…AIIDYLPSPM (275 aa)) enclose the tr-type G domain. GTP is bound by residues 17–24 (AHIDAGKT), 81–85 (DTPGH), and 135–138 (NKMD).

The protein belongs to the TRAFAC class translation factor GTPase superfamily. Classic translation factor GTPase family. EF-G/EF-2 subfamily.

The protein resides in the cytoplasm. Functionally, catalyzes the GTP-dependent ribosomal translocation step during translation elongation. During this step, the ribosome changes from the pre-translocational (PRE) to the post-translocational (POST) state as the newly formed A-site-bound peptidyl-tRNA and P-site-bound deacylated tRNA move to the P and E sites, respectively. Catalyzes the coordinated movement of the two tRNA molecules, the mRNA and conformational changes in the ribosome. The polypeptide is Elongation factor G (Phytoplasma mali (strain AT)).